The chain runs to 152 residues: D-aminoacyl-tRNA deacylase 1 (152 aa).

A Gly-cisPro motif, important for rejection of L-amino acids motif is present at residues 140 to 141; sequence GP.

It belongs to the DTD family. In terms of assembly, homodimer.

It localises to the cytoplasm. The catalysed reaction is glycyl-tRNA(Ala) + H2O = tRNA(Ala) + glycine + H(+). The enzyme catalyses a D-aminoacyl-tRNA + H2O = a tRNA + a D-alpha-amino acid + H(+). Functionally, an aminoacyl-tRNA editing enzyme that deacylates mischarged D-aminoacyl-tRNAs. Hydrolyzes correctly charged, achiral, glycyl-tRNA(Gly). Deacylates mischarged D.melanogaster and E.coli glycyl-tRNA(Ala), protecting cells against glycine mischarging by AlaRS. Acts via tRNA-based rather than protein-based catalysis; rejects L-amino acids rather than detecting D-amino acids in the active site. By recycling D-aminoacyl-tRNA to D-amino acids and free tRNA molecules, this enzyme counteracts the toxicity associated with the formation of D-aminoacyl-tRNA entities in vivo and helps enforce protein L-homochirality. This Leishmania major protein is D-aminoacyl-tRNA deacylase 1 (dtd1).